A 103-amino-acid chain; its full sequence is Cell division suppressor protein YneA (103 aa).

Positions 36–87 (VKIEVQEGDTLWELADRIKGGKTADKHKFIEWVADKNNLPTSVIKPGDVLIL) constitute a LysM domain.

The protein belongs to the YneA family.

The protein localises to the cytoplasm. Functionally, inhibits cell division during the SOS response. Affects a later stage of the cell division protein assembly, after the assembly of the Z ring, by probably suppressing recruitment of FtsL and/or DivIC to the division machinery. This chain is Cell division suppressor protein YneA, found in Bacillus licheniformis (strain ATCC 14580 / DSM 13 / JCM 2505 / CCUG 7422 / NBRC 12200 / NCIMB 9375 / NCTC 10341 / NRRL NRS-1264 / Gibson 46).